The sequence spans 72 residues: Conotoxin Ep11.1 (72 aa).

The first 19 residues, Met-1–Gly-19, serve as a signal peptide directing secretion. A propeptide spanning residues Glu-20–Leu-32 is cleaved from the precursor. Intrachain disulfides connect Cys-39-Cys-53, Cys-46-Cys-58, Cys-52-Cys-63, and Cys-57-Cys-70.

It belongs to the conotoxin I1 superfamily. Expressed by the venom duct.

Its subcellular location is the secreted. In Conus episcopatus (Bishop's cone), this protein is Conotoxin Ep11.1.